The primary structure comprises 412 residues: Double C2-like domain-containing protein beta (412 aa).

The segment at 1 to 36 (MTLRRRGEKATISIQEHMAIDVCPGPIRPIKQISDY) is negatively regulates targeting to plasma membrane. A mediates interaction with DYNLT1 region spans residues 1-90 (MTLRRRGEKA…EDVDQLFGAY (90 aa)). Residues 38-123 (PRFPRGLPPT…PDADGYESDD (86 aa)) are disordered. The segment covering 49–73 (APRASAPPDAPARSPAATAGPRSPS) has biased composition (low complexity). Residues 95–108 (GPSPGPSPVRPPAK) show a composition bias toward pro residues. A compositionally biased stretch (acidic residues) spans 112 to 123 (DEPDADGYESDD). C2 domains are found at residues 126-250 (ALGT…SICL) and 266-399 (ERGR…ERWH). Residues aspartate 157, aspartate 163, aspartate 218, aspartate 220, aspartate 297, aspartate 303, aspartate 357, aspartate 359, and aspartate 365 each coordinate Ca(2+). A mediates interaction with STXBP3 region spans residues 257–375 (DKAEDKSLEE…FIGGVVLGIN (119 aa)). Serine 411 bears the Phosphoserine mark.

Interacts with STX4; the interaction is calcium-dependent, increased by insulin and glucose, and mediates vesicle fusion with plasma membrane in pancreatic cells and adipocytes. Interacts with STXBP3; the interaction is direct, occurs at the cell membrane and regulates glucose-stimulated insulin secretion. Interacts with cytoplasmic dynein light chain DYNLT1. Interacts with the SNARE (soluble N-ethylmaleimide-sensitive factor attached protein receptor) complex composed of SNAP25, STX1A and VAMP2; the interaction is calcium-dependent and competitive with SYT1. May interact with UNC13A; the interaction mediates targeting to the plasma membrane. Requires Ca(2+) as cofactor. Expressed in brain; highly enriched in neurons.

The protein localises to the cytoplasm. It is found in the cytoplasmic granule. It localises to the cell membrane. Calcium sensor which positively regulates SNARE-dependent fusion of vesicles with membranes. Binds phospholipids in a calcium-dependent manner and may act at the priming stage of fusion by modifying membrane curvature to stimulate fusion. Involved in calcium-triggered exocytosis in chromaffin cells and calcium-dependent spontaneous release of neurotransmitter in absence of action potentials in neuronal cells. Involved both in glucose-stimulated insulin secretion in pancreatic cells and insulin-dependent GLUT4 transport to the plasma membrane in adipocytes. The sequence is that of Double C2-like domain-containing protein beta (Doc2b) from Rattus norvegicus (Rat).